Consider the following 287-residue polypeptide: Elongation factor Ts (287 aa).

The involved in Mg(2+) ion dislocation from EF-Tu stretch occupies residues 80-83; sequence TDFL.

Belongs to the EF-Ts family.

Its subcellular location is the cytoplasm. Associates with the EF-Tu.GDP complex and induces the exchange of GDP to GTP. It remains bound to the aminoacyl-tRNA.EF-Tu.GTP complex up to the GTP hydrolysis stage on the ribosome. This chain is Elongation factor Ts, found in Pseudomonas entomophila (strain L48).